Reading from the N-terminus, the 141-residue chain is Hemoglobin subunit alpha-2 (141 aa).

One can recognise a Globin domain in the interval 1-141 (VLTDAERKEV…VATVLTSKYR (141 aa)). Position 58 (His58) interacts with O2. His87 contacts heme b.

The protein belongs to the globin family. As to quaternary structure, heterotetramer of two alpha chains and two beta chains. As to expression, red blood cells.

Functionally, involved in oxygen transport from the lung to the various peripheral tissues. This is Hemoglobin subunit alpha-2 from Tachyglossus aculeatus aculeatus (Southeast Australian short-beaked echidna).